Reading from the N-terminus, the 184-residue chain is Inner membrane-spanning protein YciB (184 aa).

The next 5 membrane-spanning stretches (helical) occupy residues 19–39 (LVGIREAAITLIIATLIQLLI), 52–72 (LFMGIAVVFFGTLTAYFNQLE), 76–96 (WKVTIVYAIFALVLLVSQYGF), 123–143 (LGWALFFLLCMLINLYISQYL), and 151–171 (FKTFGILGMTLIATIITGIYI).

This sequence belongs to the YciB family.

It is found in the cell inner membrane. Its function is as follows. Plays a role in cell envelope biogenesis, maintenance of cell envelope integrity and membrane homeostasis. The sequence is that of Inner membrane-spanning protein YciB from Pasteurella multocida (strain Pm70).